The sequence spans 529 residues: Bifunctional purine biosynthesis protein PurH (529 aa).

The 148-residue stretch at Met1 to Val148 folds into the MGS-like domain.

The protein belongs to the PurH family.

The catalysed reaction is (6R)-10-formyltetrahydrofolate + 5-amino-1-(5-phospho-beta-D-ribosyl)imidazole-4-carboxamide = 5-formamido-1-(5-phospho-D-ribosyl)imidazole-4-carboxamide + (6S)-5,6,7,8-tetrahydrofolate. It carries out the reaction IMP + H2O = 5-formamido-1-(5-phospho-D-ribosyl)imidazole-4-carboxamide. Its pathway is purine metabolism; IMP biosynthesis via de novo pathway; 5-formamido-1-(5-phospho-D-ribosyl)imidazole-4-carboxamide from 5-amino-1-(5-phospho-D-ribosyl)imidazole-4-carboxamide (10-formyl THF route): step 1/1. It functions in the pathway purine metabolism; IMP biosynthesis via de novo pathway; IMP from 5-formamido-1-(5-phospho-D-ribosyl)imidazole-4-carboxamide: step 1/1. This chain is Bifunctional purine biosynthesis protein PurH, found in Salmonella arizonae (strain ATCC BAA-731 / CDC346-86 / RSK2980).